We begin with the raw amino-acid sequence, 330 residues long: Protein IN CHLOROPLAST ATPASE BIOGENESIS, chloroplastic (330 aa).

A chloroplast-targeting transit peptide spans Met1–Lys35.

Interacts with ATPC1.

The protein resides in the plastid. It localises to the chloroplast stroma. Involved in the assembly of the F(1) ATP synthase in chloroplast thylakoid membranes. Functions downstream of the CPN60 chaperones to promote assembly of the catalytically active core of the chloroplast ATP synthase. Assists the assembly of the ATP synthase gamma subunit into the active F(1) core downstream of CPN60-mediated folding, which is critical for the biogenesis of the chloroplast ATP synthase. The protein is Protein IN CHLOROPLAST ATPASE BIOGENESIS, chloroplastic of Arabidopsis thaliana (Mouse-ear cress).